The chain runs to 116 residues: MSYKEKSVRIAVYGTLRKGKPLHWYLKGAKFLGEDWIEGYQLYFEYLPYAVKGKGKLKVEVYEVDKETFERINEIEIGTGYRLVEVSTKFGKAFLWEWGSKPRGKRIKSGDFDEIR.

13–16 (YGTL) contacts substrate. The active-site Proton acceptor is Glu76.

It belongs to the gamma-glutamylcyclotransferase family.

Putative gamma-glutamylcyclotransferase. The protein is Putative gamma-glutamylcyclotransferase PH0828 of Pyrococcus horikoshii (strain ATCC 700860 / DSM 12428 / JCM 9974 / NBRC 100139 / OT-3).